The following is a 264-amino-acid chain: Ribosomal protein L11 methyltransferase (264 aa).

S-adenosyl-L-methionine-binding residues include threonine 116, glycine 137, aspartate 159, and asparagine 200.

The protein belongs to the methyltransferase superfamily. PrmA family.

It is found in the cytoplasm. The enzyme catalyses L-lysyl-[protein] + 3 S-adenosyl-L-methionine = N(6),N(6),N(6)-trimethyl-L-lysyl-[protein] + 3 S-adenosyl-L-homocysteine + 3 H(+). Its function is as follows. Methylates ribosomal protein L11. The protein is Ribosomal protein L11 methyltransferase of Thermotoga petrophila (strain ATCC BAA-488 / DSM 13995 / JCM 10881 / RKU-1).